The chain runs to 274 residues: Bis(5'-nucleosyl)-tetraphosphatase, symmetrical (274 aa).

It belongs to the Ap4A hydrolase family.

The catalysed reaction is P(1),P(4)-bis(5'-adenosyl) tetraphosphate + H2O = 2 ADP + 2 H(+). Functionally, hydrolyzes diadenosine 5',5'''-P1,P4-tetraphosphate to yield ADP. This chain is Bis(5'-nucleosyl)-tetraphosphatase, symmetrical, found in Shewanella sp. (strain W3-18-1).